Consider the following 234-residue polypeptide: Large ribosomal subunit protein uL1 (234 aa).

Belongs to the universal ribosomal protein uL1 family. In terms of assembly, part of the 50S ribosomal subunit.

Binds directly to 23S rRNA. The L1 stalk is quite mobile in the ribosome, and is involved in E site tRNA release. Functionally, protein L1 is also a translational repressor protein, it controls the translation of the L11 operon by binding to its mRNA. This chain is Large ribosomal subunit protein uL1, found in Helicobacter pylori (strain Shi470).